A 334-amino-acid chain; its full sequence is Pre-mRNA leakage protein 39 (334 aa).

As to quaternary structure, interacts with MLP1 and MLP2.

It localises to the nucleus membrane. Functionally, involved in the nuclear retention of improperly spliced pre-mRNAs. This is Pre-mRNA leakage protein 39 (PML39) from Saccharomyces cerevisiae (strain ATCC 204508 / S288c) (Baker's yeast).